The sequence spans 128 residues: Small ribosomal subunit protein uS9 (128 aa).

A disordered region spans residues 105–128; sequence DPRSVERKKPGQPKARRRFQFSKR. The segment covering 114 to 128 has biased composition (basic residues); the sequence is PGQPKARRRFQFSKR.

It belongs to the universal ribosomal protein uS9 family.

The polypeptide is Small ribosomal subunit protein uS9 (Bacteroides thetaiotaomicron (strain ATCC 29148 / DSM 2079 / JCM 5827 / CCUG 10774 / NCTC 10582 / VPI-5482 / E50)).